The following is a 326-amino-acid chain: MHRTTRIKITELNPHLMCVLCGGYFIDATTIIECLHSFCKTCIVRYLETSKYCPICDVQVHKTRPLLNIRSDKTLQDIVYKLVPGLFKNEMKRRRDFYAAHPSADAANGSNEDRGEVADEDKRIITDDEIISLSIEFFDQNRLDRKINKDKEKSKEEVNDKRYLRCPAAMTVMHLRKFLRSKMDIPNTFQIDVMYEEEPLKDYYTLMDIAYIYTWRRNGPLPLKYRVRPTCKRMKISHQRDGLTNTGELESDSGSDKANSPAGGIPSTSSCLPSPSTPVQSPHPQFPHISSTMNGTSSSPSGNHQSSFANRPRKSSVNGSSATSSG.

The segment at 18-57 (CVLCGGYFIDATTIIECLHSFCKTCIVRYLETSKYCPICD) adopts an RING-type zinc-finger fold. Residues 81 to 95 (KLVPGLFKNEMKRRR) carry the Nuclear localization signal motif. Residues 162–182 (RYLRCPAAMTVMHLRKFLRSK) form an interaction with PHC2 region. The segment at 164–228 (LRCPAAMTVM…GPLPLKYRVR (65 aa)) is interaction with E4F1. Residues 236 to 326 (ISHQRDGLTN…VNGSSATSSG (91 aa)) form a disordered region. Low complexity-rich tracts occupy residues 266–278 (PSTSSCLPSPSTP), 290–303 (SSTMNGTSSSPSGN), and 315–326 (SSVNGSSATSSG).

Component of a PRC1-like complex. Identified in a PRC1-like HPRC-H complex with CBX2, CBX4, CBX8, PHC1, PHC2, PHC3 RING1 and RNF2. Interacts with RNF2/RING2. Interacts with RING1. Part of a complex that contains RNF2, UB2D3 and BMI1, where RNF2 and BMI1 form a tight heterodimer, and UB2D3 interacts only with RNF2. The complex composed of RNF2, UB2D3 and BMI1 binds nucleosomes, and has activity only with nucleosomal histone H2A. Interacts with CBX7 and CBX8. Interacts with SPOP. Part of a complex consisting of BMI1, CUL3 and SPOP. Interacts with E4F1. Interacts with PHC2. Interacts with zinc finger protein ZNF277. May be part of a complex including at least ZNF277, BMI1 and RNF2/RING2. Post-translationally, may be polyubiquitinated; which does not lead to proteasomal degradation. Monoubiquitinated.

The protein localises to the nucleus. Its subcellular location is the cytoplasm. In terms of biological role, component of a Polycomb group (PcG) multiprotein PRC1-like complex, a complex class required to maintain the transcriptionally repressive state of many genes, including Hox genes, throughout development. PcG PRC1 complex acts via chromatin remodeling and modification of histones; it mediates monoubiquitination of histone H2A 'Lys-119', rendering chromatin heritably changed in its expressibility. The complex composed of RNF2, UB2D3 and BMI1 binds nucleosomes, and has activity only with nucleosomal histone H2A. In the PRC1-like complex, regulates the E3 ubiquitin-protein ligase activity of RNF2/RING2. In Bos taurus (Bovine), this protein is Polycomb complex protein BMI-1 (BMI1).